A 384-amino-acid polypeptide reads, in one-letter code: N-acetyldiaminopimelate deacetylase (384 aa).

Residue D74 is part of the active site. Residue E133 is the Proton acceptor of the active site.

This sequence belongs to the peptidase M20A family. N-acetyldiaminopimelate deacetylase subfamily.

The enzyme catalyses N-acetyl-(2S,6S)-2,6-diaminopimelate + H2O = (2S,6S)-2,6-diaminopimelate + acetate. Its pathway is amino-acid biosynthesis; L-lysine biosynthesis via DAP pathway; LL-2,6-diaminopimelate from (S)-tetrahydrodipicolinate (acetylase route): step 3/3. In terms of biological role, catalyzes the conversion of N-acetyl-diaminopimelate to diaminopimelate and acetate. This chain is N-acetyldiaminopimelate deacetylase, found in Lactiplantibacillus plantarum (strain ATCC BAA-793 / NCIMB 8826 / WCFS1) (Lactobacillus plantarum).